The sequence spans 323 residues: Melanocortin receptor 3 (323 aa).

Residues 1 to 37 are Extracellular-facing; sequence MNSSCCPSSSYPTLPNLSQHPAAPSASNRSGSGFCEQ. N-linked (GlcNAc...) asparagine glycosylation is found at Asn-2, Asn-16, and Asn-28. A helical transmembrane segment spans residues 38-63; it reads VFIKPEVFLALGIVSLMENILVILAV. Over 64–75 the chain is Cytoplasmic; it reads VRNGNLHSPMYF. A helical transmembrane segment spans residues 76–100; that stretch reads FLCSLAAADMLVSLSNSLETIMIVV. The Extracellular segment spans residues 101 to 118; the sequence is INSDSLTLEDQFIQHMDN. The helical transmembrane segment at 119–140 threads the bilayer; that stretch reads IFDSMICISLVASICNLLAIAV. The Cytoplasmic segment spans residues 141–160; that stretch reads DRYVTIFYALRYHSIMTVRK. The helical transmembrane segment at 161 to 181 threads the bilayer; the sequence is ALSLIVAIWVCCGICGVMFIV. Topologically, residues 182–186 are extracellular; sequence YSESK. A helical membrane pass occupies residues 187 to 210; the sequence is MVIVCLITMFFAMVLLMGTLYIHM. The Cytoplasmic portion of the chain corresponds to 211 to 245; sequence FLFARLHVQRIAALPPADGVAPQQHSCMKGAVTIT. Residues 246–268 traverse the membrane as a helical segment; sequence ILLGVFIFCWAPFFLHLVLIITC. At 269–277 the chain is on the extracellular side; the sequence is PTNPYCICY. The helical transmembrane segment at 278-301 threads the bilayer; the sequence is TAHFNTYLVLIMCNSVIDPLIYAF. Residues 302 to 323 lie on the Cytoplasmic side of the membrane; that stretch reads RSLELRNTFKEILCGCNGMNVG. The S-palmitoyl cysteine moiety is linked to residue Cys-315.

The protein belongs to the G-protein coupled receptor 1 family. In terms of tissue distribution, brain.

The protein resides in the cell membrane. In terms of biological role, receptor for MSH (alpha, beta and gamma) and ACTH. This receptor is mediated by G proteins which activate adenylate cyclase. Required for expression of anticipatory patterns of activity and wakefulness during periods of limited nutrient availability and for the normal regulation of circadian clock activity in the brain. This chain is Melanocortin receptor 3 (Mc3r), found in Rattus norvegicus (Rat).